The chain runs to 359 residues: Nicotinate N-methyltransferase 1 (359 aa).

Asp-226 contributes to the S-adenosyl-L-methionine binding site.

Belongs to the class I-like SAM-binding methyltransferase superfamily. Cation-independent O-methyltransferase family. Highly expressed in anthers, pistils, developing siliques, and developing seeds.

It is found in the cytoplasm. It localises to the cytosol. The catalysed reaction is nicotinate + S-adenosyl-L-methionine = N-methylnicotinate + S-adenosyl-L-homocysteine. Involved in nicotinate detoxification in planta. Catalyzes the conversion of nicotinate to N-methylnicotinate, which is a detoxified form of endogenous nicotinate in planta. This chain is Nicotinate N-methyltransferase 1, found in Arabidopsis thaliana (Mouse-ear cress).